A 555-amino-acid polypeptide reads, in one-letter code: MRSKKMTHGLEKAPHRSLLYALGLTREELSRPLVGVVNSANEVVPGHIHLHTIAEAVKAGVRAAGGTPMEFPAIAVCDGLAMNHEGMRFSLPSREIIADSIEIMATAHPFDALVFIPNCDKSVPGMLMAMLRMNVPSILISGGPMMAGTGNGKAADLITVFEGVGMVRQGRMTEDELEQLSETACPGCGSCAGMFTANSMNCLSETIGLALPGNGTTPANSAARVRLAKHAGMRVMELLERDIKPRDIVTEKAVANAVAADMALGCSTNTVLHLPAVFAEAGLDLTLGIFDEVSRKTPNLCKLSPAGDQHIQDLHRAGGIPAVMAELDKAGRIHRDALTVTGRTVGENLDALGAAVRDHDVIRPMEKPYSPQGGIAILYGSLAPEGAVVKQSAVAPEMMQRTARARVFESEEAAFEAIMAQRIEKGDAIIIRYEGPKGGPGMREMLSPTAAIAGIGLGADVALITDGRFSGGTRGAAIGHVSPEAADGGPIGLVREGDMIEIDIPARKLDLLVDEAEMERRRAAFTPVVKEVTSPLLKRYSRLVTSAANGAVYKR.

A Mg(2+)-binding site is contributed by Asp78. Residue Cys119 participates in [2Fe-2S] cluster binding. Positions 120 and 121 each coordinate Mg(2+). The residue at position 121 (Lys121) is an N6-carboxylysine. Cys191 provides a ligand contact to [2Fe-2S] cluster. Glu444 contributes to the Mg(2+) binding site. Catalysis depends on Ser470, which acts as the Proton acceptor.

This sequence belongs to the IlvD/Edd family. As to quaternary structure, homodimer. [2Fe-2S] cluster is required as a cofactor. The cofactor is Mg(2+).

It catalyses the reaction (2R)-2,3-dihydroxy-3-methylbutanoate = 3-methyl-2-oxobutanoate + H2O. It carries out the reaction (2R,3R)-2,3-dihydroxy-3-methylpentanoate = (S)-3-methyl-2-oxopentanoate + H2O. The protein operates within amino-acid biosynthesis; L-isoleucine biosynthesis; L-isoleucine from 2-oxobutanoate: step 3/4. It participates in amino-acid biosynthesis; L-valine biosynthesis; L-valine from pyruvate: step 3/4. Functions in the biosynthesis of branched-chain amino acids. Catalyzes the dehydration of (2R,3R)-2,3-dihydroxy-3-methylpentanoate (2,3-dihydroxy-3-methylvalerate) into 2-oxo-3-methylpentanoate (2-oxo-3-methylvalerate) and of (2R)-2,3-dihydroxy-3-methylbutanoate (2,3-dihydroxyisovalerate) into 2-oxo-3-methylbutanoate (2-oxoisovalerate), the penultimate precursor to L-isoleucine and L-valine, respectively. In Oleidesulfovibrio alaskensis (strain ATCC BAA-1058 / DSM 17464 / G20) (Desulfovibrio alaskensis), this protein is Dihydroxy-acid dehydratase.